Reading from the N-terminus, the 363-residue chain is Early boundary activity protein 1 (363 aa).

The segment covering 155 to 168 has biased composition (basic and acidic residues); the sequence is MDQEPEHKQSHEQD. The disordered stretch occupies residues 155–242; that stretch reads MDQEPEHKQS…NAKRRCPGFE (88 aa). Residues 198-209 are compositionally biased toward acidic residues; that stretch reads EDLGLDDDDEDY. The region spanning 255–354 is the BEN domain; sequence GPNGTEVSRI…TKCADENKML (100 aa).

The heterotrimeric Elba complex consists of Elba1, Elba2 and Elba3.

The protein localises to the nucleus. The heterotrimeric Elba complex is required for chromatin domain boundary function during early embryogenesis. It binds to a 8-bp sequence 5'-CCAATAAG-3' in the Fab-7 insulator or boundary element in the bithorax complex and contributes to its insulator or boundary activity. Elba1 may act as a transcriptional repressor and binds the palindromic sequence 5'-CCAATTGG-3' to mediate transcriptional repression. The chain is Early boundary activity protein 1 from Drosophila melanogaster (Fruit fly).